The primary structure comprises 558 residues: EF-hand and coiled-coil domain-containing protein 1 (558 aa).

The region spanning 43–78 (GLDQYLQEVFHHLDCRGAGRLPRADFRALCAVLGLN) is the EF-hand domain. Residues 161–170 (LRRPRRRRRP) show a composition bias toward basic residues. 2 disordered regions span residues 161-183 (LRRP…YGER) and 304-395 (RSEG…QPSG). Coiled coils occupy residues 179-304 (AYGE…RGYR) and 453-495 (VEAE…LNIS).

This chain is EF-hand and coiled-coil domain-containing protein 1 (Efcc1), found in Mus musculus (Mouse).